The following is a 433-amino-acid chain: ATP-dependent protease ATPase subunit HslU (433 aa).

ATP-binding positions include isoleucine 18, 60–65, aspartate 246, glutamate 311, and arginine 383; that span reads GVGKTE.

Belongs to the ClpX chaperone family. HslU subfamily. In terms of assembly, a double ring-shaped homohexamer of HslV is capped on each side by a ring-shaped HslU homohexamer. The assembly of the HslU/HslV complex is dependent on binding of ATP.

It localises to the cytoplasm. Functionally, ATPase subunit of a proteasome-like degradation complex; this subunit has chaperone activity. The binding of ATP and its subsequent hydrolysis by HslU are essential for unfolding of protein substrates subsequently hydrolyzed by HslV. HslU recognizes the N-terminal part of its protein substrates and unfolds these before they are guided to HslV for hydrolysis. The protein is ATP-dependent protease ATPase subunit HslU of Cereibacter sphaeroides (strain KD131 / KCTC 12085) (Rhodobacter sphaeroides).